The primary structure comprises 438 residues: MYHDYASKLLADYRSDPPLWESDLPRHNRYSDNILNARYCGNKNGAAPVYNECTNSPGKAEKGLQLSDLRNFSFMLNPQHKNIGYGDAQDLEPYSPIPKDKLFNNLKIHRPAFSTHTENLIRRNVVRTEKKTFPQVATLKSTQKNCLTQPSSLPSLKNPKNISMPSTRFSEHIKFFSYEDVPKLRIKGTIKHEQHLGDQMPGQHYNGYIPHKDVYNILCLAHNLPASVEKVMAGRGIPLGNPHVKPNIEQELIKSTCTYTGVPILGPLPSKDLQHGREYQEFSANRHMLQVSNILHSVFANHSIKPQILEDIPTLNAQLTSIKPVSPFLNKAYQTHYMENIVTLVPRFKSIANYSSPIPHYSKRNSGQAEYFDTSKQTISRHNNYIPKYTGGIGDSKLDSSFPKDFNASSVPLTSAEKDHSLRGDNSACCISSISPSL.

Belongs to the asfivirus p49 structural protein family.

Its subcellular location is the virion. Together with the penton and the other minor capsid proteins (M1249L, p17), forms a complicated network immediately below the outer capsid shell, stabilizing the whole capsid. Plays an essential role in the formation of infectious virus particles. Especially required for the formation of the capsid vertices. During virion assembly, associates with the membrane and probably mediates the docking of the penton complex to the inner membrane, where it recruits the capsomers to form the penton core. The polypeptide is Minor capsid protein p49 (Ornithodoros (relapsing fever ticks)).